Here is a 183-residue protein sequence, read N- to C-terminus: A-type ATP synthase subunit E (183 aa).

The protein belongs to the V-ATPase E subunit family. In terms of assembly, has multiple subunits with at least A(3), B(3), C, D, E, F, H, I and proteolipid K(x).

It is found in the cell membrane. Functionally, component of the A-type ATP synthase that produces ATP from ADP in the presence of a proton gradient across the membrane. In Methanosarcina acetivorans (strain ATCC 35395 / DSM 2834 / JCM 12185 / C2A), this protein is A-type ATP synthase subunit E.